We begin with the raw amino-acid sequence, 395 residues long: Putative 8-amino-7-oxononanoate synthase (395 aa).

Arginine 22 contributes to the substrate binding site. 109–110 (GY) contacts pyridoxal 5'-phosphate. Histidine 139 contributes to the substrate binding site. Pyridoxal 5'-phosphate-binding positions include serine 187, 212-215 (DEAH), and 241-244 (TFSK). At lysine 244 the chain carries N6-(pyridoxal phosphate)lysine. Residue threonine 358 participates in substrate binding.

The protein belongs to the class-II pyridoxal-phosphate-dependent aminotransferase family. BioF subfamily. In terms of assembly, homodimer. The cofactor is pyridoxal 5'-phosphate.

The catalysed reaction is 6-carboxyhexanoyl-[ACP] + L-alanine + H(+) = (8S)-8-amino-7-oxononanoate + holo-[ACP] + CO2. It participates in cofactor biosynthesis; biotin biosynthesis. Catalyzes the decarboxylative condensation of pimeloyl-[acyl-carrier protein] and L-alanine to produce 8-amino-7-oxononanoate (AON), [acyl-carrier protein], and carbon dioxide. This Magnetococcus marinus (strain ATCC BAA-1437 / JCM 17883 / MC-1) protein is Putative 8-amino-7-oxononanoate synthase (bioF).